We begin with the raw amino-acid sequence, 166 residues long: Succinate dehydrogenase [ubiquinone] cytochrome b small subunit, mitochondrial (166 aa).

At 1-65 (MASVARSSAL…VPPPSPSHGS (65 aa)) the chain is on the mitochondrial matrix side. A helical membrane pass occupies residues 66–87 (YHWTFDRVVAAGLIPLTVAPFA). The Mitochondrial intermembrane portion of the chain corresponds to 88–94 (AGSLNPT). The chain crosses the membrane as a helical span at residues 95–115 (MDAVLAATILIHSHTGFGNII). Heme is bound at residue histidine 106. Residues 116–124 (VDYVPSKRV) are Mitochondrial matrix-facing. An a ubiquinone-binding site is contributed by tyrosine 118. A helical transmembrane segment spans residues 125-149 (PKARKVFTWGLNAATVLVGLALYEF). Topologically, residues 150–166 (ETTDVGLTETIKRVWKA) are mitochondrial intermembrane.

It belongs to the CybS family. Forms part of complex II containing four subunits: a flavoprotein (FP), an iron-sulfur protein (IP) and a cytochrome b composed of a large and a small subunit.

The protein localises to the mitochondrion inner membrane. Its pathway is carbohydrate metabolism; tricarboxylic acid cycle. Membrane-anchoring subunit of succinate dehydrogenase (SDH) that is involved in complex II of the mitochondrial electron transport chain and is responsible for transferring electrons from succinate to ubiquinone (coenzyme Q). In Neurospora crassa (strain ATCC 24698 / 74-OR23-1A / CBS 708.71 / DSM 1257 / FGSC 987), this protein is Succinate dehydrogenase [ubiquinone] cytochrome b small subunit, mitochondrial.